The primary structure comprises 215 residues: Chaperone protein TorD (215 aa).

The protein belongs to the TorD/DmsD family. TorD subfamily.

The protein localises to the cytoplasm. In terms of biological role, involved in the biogenesis of TorA. Acts on TorA before the insertion of the molybdenum cofactor and, as a result, probably favors a conformation of the apoenzyme that is competent for acquiring the cofactor. The chain is Chaperone protein TorD from Vibrio atlanticus (strain LGP32) (Vibrio splendidus (strain Mel32)).